The primary structure comprises 599 residues: Proline dehydrogenase 1, mitochondrial (599 aa).

Disordered stretches follow at residues 20–39 (STKP…LRGC) and 152–180 (EEAE…EKQY). Over residues 23-39 (PQAQEQPPASPEALRGC) the composition is skewed to low complexity. Residues 153–180 (EAERKEMESCTSEAERDGSGANKREKQY) are compositionally biased toward basic and acidic residues. 3 positions are modified to N6-acetyllysine: Lys356, Lys367, and Lys485.

This sequence belongs to the proline oxidase family. Requires FAD as cofactor. As to expression, expressed in liver, kidney, heart and to a lesser extent in brain, lung and muscle.

The protein resides in the mitochondrion matrix. The catalysed reaction is L-proline + a quinone = (S)-1-pyrroline-5-carboxylate + a quinol + H(+). Its pathway is amino-acid degradation; L-proline degradation into L-glutamate; L-glutamate from L-proline: step 1/2. In terms of biological role, converts proline to delta-1-pyrroline-5-carboxylate. In Mus musculus (Mouse), this protein is Proline dehydrogenase 1, mitochondrial (Prodh).